The following is a 108-amino-acid chain: Evasin P1156 (108 aa).

An N-terminal signal peptide occupies residues methionine 1–alanine 28. 3 disulfide bridges follow: cysteine 41-cysteine 63, cysteine 45-cysteine 65, and cysteine 56-cysteine 76. Asparagine 44 is a glycosylation site (N-linked (GlcNAc...) asparagine). The segment at asparagine 89–histidine 108 is disordered. The span at glutamate 96–histidine 108 shows a compositional bias: basic and acidic residues.

It localises to the secreted. Salivary chemokine-binding protein which has chemokine-neutralizing activity and binds to host chemokines CXCL1, CXCL2, CXCL3, CXCL5, CXCL6 and CXCL8. The sequence is that of Evasin P1156 from Ixodes ricinus (Common tick).